The following is a 503-amino-acid chain: Probable cytosol aminopeptidase (503 aa).

Mn(2+) contacts are provided by Lys-270 and Asp-275. Lys-282 is a catalytic residue. The Mn(2+) site is built by Asp-293, Asp-352, and Glu-354. Residue Arg-356 is part of the active site.

This sequence belongs to the peptidase M17 family. Mn(2+) serves as cofactor.

It is found in the cytoplasm. It carries out the reaction Release of an N-terminal amino acid, Xaa-|-Yaa-, in which Xaa is preferably Leu, but may be other amino acids including Pro although not Arg or Lys, and Yaa may be Pro. Amino acid amides and methyl esters are also readily hydrolyzed, but rates on arylamides are exceedingly low.. The catalysed reaction is Release of an N-terminal amino acid, preferentially leucine, but not glutamic or aspartic acids.. Functionally, presumably involved in the processing and regular turnover of intracellular proteins. Catalyzes the removal of unsubstituted N-terminal amino acids from various peptides. The chain is Probable cytosol aminopeptidase from Shigella flexneri.